We begin with the raw amino-acid sequence, 736 residues long: Peroxisomal multifunctional enzyme type 2 (736 aa).

The segment at 1-305 (MGSPLRFDGR…IEVLSKIDSE (305 aa)) is (3R)-hydroxyacyl-CoA dehydrogenase. Residues 13-37 (LVTG…ALVV), L21, and D40 contribute to the NAD(+) site. Position 46 is an N6-acetyllysine; alternate (K46). K46 is subject to N6-succinyllysine; alternate. Position 52 is a phosphoserine (S52). N6-succinyllysine is present on residues K57 and K68. 75–76 (SV) contributes to the NAD(+) binding site. K84 carries the N6-succinyllysine modification. N99 serves as a coordination point for NAD(+). A substrate-binding site is contributed by S151. Y164 acts as the Proton acceptor in catalysis. Residues 164 to 168 (YSAAK) and 196 to 199 (AGSR) each bind NAD(+). Phosphothreonine is present on T265. Position 275 is an N6-succinyllysine (K275). Residues S304 and S309 each carry the phosphoserine modification. The interval 322–622 (SGFAGAIGQK…AKTPSEGGKL (301 aa)) is enoyl-CoA hydratase 2. K356 carries the post-translational modification N6-succinyllysine. 406–407 (HG) contributes to the (3R)-3-hydroxydecanoyl-CoA binding site. K424 carries the post-translational modification N6-succinyllysine. (3R)-3-hydroxydecanoyl-CoA contacts are provided by residues K435, 510 to 515 (DWNPLH), G533, and F563. The 117-residue stretch at 484–600 (IPNRPPDAVL…QETGDIVISN (117 aa)) folds into the MaoC-like domain. The residue at position 565 (K565) is an N6-acetyllysine. K579 and K663 each carry N6-succinyllysine. In terms of domain architecture, SCP2 spans 624–736 (STFVFEEIGR…QMILKDYAKL (113 aa)). N6-acetyllysine is present on K669. Position 706 (Q706) interacts with substrate. K707 carries the N6-acetyllysine modification. Position 724 (Q724) interacts with substrate. Residue K725 is modified to N6-succinyllysine. Residues 734-736 (AKL) carry the Microbody targeting signal motif.

Belongs to the short-chain dehydrogenases/reductases (SDR) family. Homodimer. Present in many tissues with highest concentrations in liver, heart, prostate and testis.

It is found in the peroxisome. It catalyses the reaction a (3R)-3-hydroxyacyl-CoA + NAD(+) = a 3-oxoacyl-CoA + NADH + H(+). The enzyme catalyses a (3R)-3-hydroxyacyl-CoA = a (2E)-enoyl-CoA + H2O. It carries out the reaction (24R,25R)-3alpha,7alpha,12alpha,24-tetrahydroxy-5beta-cholestan-26-oyl-CoA = (24E)-3alpha,7alpha,12alpha-trihydroxy-5beta-cholest-24-en-26-oyl-CoA + H2O. The catalysed reaction is (2E)-octenoyl-CoA + H2O = (3R)-hydroxyoctanoyl-CoA. It catalyses the reaction (3R)-hydroxyoctanoyl-CoA + NAD(+) = 3-oxooctanoyl-CoA + NADH + H(+). The enzyme catalyses (3R)-hydroxyhexadecanoyl-CoA + NAD(+) = 3-oxohexadecanoyl-CoA + NADH + H(+). It carries out the reaction (2E)-hexadecenedioyl-CoA + H2O = (3R)-hydroxyhexadecanedioyl-CoA. The catalysed reaction is (3R)-hydroxyhexadecanedioyl-CoA + NAD(+) = 3-oxohexadecanedioyl-CoA + NADH + H(+). It catalyses the reaction (3R)-hydroxyhexadecanoyl-CoA = (2E)-hexadecenoyl-CoA + H2O. The enzyme catalyses (3R)-3-hydroxydecanoyl-CoA = (2E)-decenoyl-CoA + H2O. It carries out the reaction (3R)-3-hydroxydecanoyl-CoA + NAD(+) = 3-oxodecanoyl-CoA + NADH + H(+). The catalysed reaction is (24R,25R)-3alpha,7alpha,12alpha,24-tetrahydroxy-5beta-cholestan-26-oyl-CoA + NAD(+) = 3alpha,7alpha,12alpha-trihydroxy-24-oxo-5beta-cholestan-26-oyl-CoA + NADH + H(+). It participates in lipid metabolism; fatty acid beta-oxidation. Its function is as follows. Bifunctional enzyme acting on the peroxisomal fatty acid beta-oxidation pathway. Catalyzes two of the four reactions in fatty acid degradation: hydration of 2-enoyl-CoA (trans-2-enoyl-CoA) to produce (3R)-3-hydroxyacyl-CoA, and dehydrogenation of (3R)-3-hydroxyacyl-CoA to produce 3-ketoacyl-CoA (3-oxoacyl-CoA), which is further metabolized by SCPx. Can use straight-chain and branched-chain fatty acids, as well as bile acid intermediates as substrates. This is Peroxisomal multifunctional enzyme type 2 from Homo sapiens (Human).